The sequence spans 432 residues: UDP-N-acetylglucosamine 1-carboxyvinyltransferase (432 aa).

Residue 22 to 23 (KN) participates in phosphoenolpyruvate binding. A UDP-N-acetyl-alpha-D-glucosamine-binding site is contributed by R96. Residue C120 is the Proton donor of the active site. C120 is subject to 2-(S-cysteinyl)pyruvic acid O-phosphothioketal. Residues 125-129 (RPVDL), D310, and I332 contribute to the UDP-N-acetyl-alpha-D-glucosamine site.

This sequence belongs to the EPSP synthase family. MurA subfamily.

It is found in the cytoplasm. It carries out the reaction phosphoenolpyruvate + UDP-N-acetyl-alpha-D-glucosamine = UDP-N-acetyl-3-O-(1-carboxyvinyl)-alpha-D-glucosamine + phosphate. Its pathway is cell wall biogenesis; peptidoglycan biosynthesis. In terms of biological role, cell wall formation. Adds enolpyruvyl to UDP-N-acetylglucosamine. The protein is UDP-N-acetylglucosamine 1-carboxyvinyltransferase of Caulobacter sp. (strain K31).